The sequence spans 177 residues: Probable DNA-directed RNA polymerase subunit delta (177 aa).

The 68-residue stretch at 14–81 (CSMIEVVHSV…GENRWGLRSW (68 aa)) folds into the HTH HARE-type domain. Residues 91–177 (ILPQPKPKKK…DETEEEEEEL (87 aa)) are disordered. Residues 106 to 177 (DGFDDYIEED…DETEEEEEEL (72 aa)) show a composition bias toward acidic residues.

It belongs to the RpoE family. In terms of assembly, RNAP is composed of a core of 2 alpha, a beta and a beta' subunits. The core is associated with a delta subunit and one of several sigma factors.

Participates in both the initiation and recycling phases of transcription. In the presence of the delta subunit, RNAP displays an increased specificity of transcription, a decreased affinity for nucleic acids, and an increased efficiency of RNA synthesis because of enhanced recycling. The protein is Probable DNA-directed RNA polymerase subunit delta of Bacillus cereus (strain G9842).